The following is a 217-amino-acid chain: Cytidylate kinase (217 aa).

9–17 (GPAGSGKTT) contributes to the ATP binding site.

It belongs to the cytidylate kinase family. Type 1 subfamily.

The protein resides in the cytoplasm. The catalysed reaction is CMP + ATP = CDP + ADP. It carries out the reaction dCMP + ATP = dCDP + ADP. The protein is Cytidylate kinase of Thermosipho melanesiensis (strain DSM 12029 / CIP 104789 / BI429).